Consider the following 619-residue polypeptide: Chaperone protein HscA homolog (619 aa).

It belongs to the heat shock protein 70 family.

Chaperone involved in the maturation of iron-sulfur cluster-containing proteins. Has a low intrinsic ATPase activity which is markedly stimulated by HscB. The polypeptide is Chaperone protein HscA homolog (Shewanella amazonensis (strain ATCC BAA-1098 / SB2B)).